A 63-amino-acid polypeptide reads, in one-letter code: MAKKCDLCGKGVVVGMKLSHSHIRTKRTWEPNLQRVRALVDGKPRRIRVCTRCLRSGRVIRAV.

The protein belongs to the bacterial ribosomal protein bL28 family.

In Desulforudis audaxviator (strain MP104C), this protein is Large ribosomal subunit protein bL28.